The chain runs to 615 residues: Putative binding protein BRA0576/BS1330_II0571 (615 aa).

A signal peptide spans 1 to 29 (MLNRFIAFFRSVFLIGLVATAFGALPARA).

It belongs to the bacterial solute-binding protein 5 family.

Its subcellular location is the periplasm. This chain is Putative binding protein BRA0576/BS1330_II0571, found in Brucella suis biovar 1 (strain 1330).